The chain runs to 189 residues: 7-methyl-GTP pyrophosphatase (189 aa).

Catalysis depends on Asp71, which acts as the Proton acceptor.

This sequence belongs to the Maf family. YceF subfamily. It depends on a divalent metal cation as a cofactor.

It localises to the cytoplasm. The catalysed reaction is N(7)-methyl-GTP + H2O = N(7)-methyl-GMP + diphosphate + H(+). In terms of biological role, nucleoside triphosphate pyrophosphatase that hydrolyzes 7-methyl-GTP (m(7)GTP). May have a dual role in cell division arrest and in preventing the incorporation of modified nucleotides into cellular nucleic acids. The sequence is that of 7-methyl-GTP pyrophosphatase from Bdellovibrio bacteriovorus (strain ATCC 15356 / DSM 50701 / NCIMB 9529 / HD100).